We begin with the raw amino-acid sequence, 73 residues long: MKKSLQLSFTFLIISIILSQGMMADAQKKNCPRKIPIKGSYCAPTICLDKCKKQHGTVGSCAEEKGFCNCACK.

Pollen specific.

This chain is Protein BP4C (BP4C), found in Brassica napus (Rape).